We begin with the raw amino-acid sequence, 421 residues long: CinA-like protein (421 aa).

The protein belongs to the CinA family.

This Synechococcus elongatus (strain ATCC 33912 / PCC 7942 / FACHB-805) (Anacystis nidulans R2) protein is CinA-like protein.